Reading from the N-terminus, the 371-residue chain is Neuropeptide S receptor (371 aa).

Over 1 to 52 (MPANLTEGSFHANQTVPMLDSSPVACTEIVTFTEALVAEEWGSFYSSFKTEQ) the chain is Extracellular. N-linked (GlcNAc...) asparagine glycosylation is found at N4 and N13. Residues 53 to 73 (LITLWVLFVVTIVGNSVVLFS) form a helical membrane-spanning segment. The Cytoplasmic segment spans residues 74 to 82 (TCRRKRKSR). Residues 83 to 103 (MTFFVTQLAITDSFTGLINIL) form a helical membrane-spanning segment. Over 104-123 (TDIIWRFTGDFMAPDLVCRV) the chain is Extracellular. Residues C121 and C197 are joined by a disulfide bond. Residues 124–144 (VRYLQVVLLYASTYVLVSLSI) form a helical membrane-spanning segment. Topologically, residues 145–164 (DRYHAIVYPMKFLQGEKQAK) are cytoplasmic. The chain crosses the membrane as a helical span at residues 165-185 (VLIGIAWSLSFLFSIPTLIIF). Over 186-212 (GKRTLSNGEVQCWALWPDDSYWTPYMT) the chain is Extracellular. Residues 213-233 (IVAFLVYFIPLAIISVIYGLV) form a helical membrane-spanning segment. Topologically, residues 234–275 (IRTIWMKSKTHETVISNCSDGKLCCSYNRGLISKAKIKAIKY) are cytoplasmic. Residues 276–296 (SIVIILAFICCWSPYFLFDIL) form a helical membrane-spanning segment. At 297-312 (DNFNVLPDTKERFYAS) the chain is on the extracellular side. A helical transmembrane segment spans residues 313 to 333 (VIIQNLPALNSAINPLIYCIF). The Cytoplasmic segment spans residues 334-371 (SSSICSPCKMQRSQDSRMTYRERSERHEMQILSKPEFI).

Belongs to the G-protein coupled receptor 1 family. Vasopressin/oxytocin receptor subfamily.

It localises to the cell membrane. In terms of biological role, G-protein coupled receptor for neuropeptide S (NPS). Promotes mobilization of intracellular Ca(2+) stores. Inhibits cell growth in response to NPS binding. Involved in pathogenesis of asthma and other IgE-mediated diseases. The polypeptide is Neuropeptide S receptor (Npsr1) (Mus musculus (Mouse)).